The following is a 196-amino-acid chain: Holliday junction branch migration complex subunit RuvA (196 aa).

Residues 1 to 61 (MYEYFEGIVT…DTGITLYGFQ (61 aa)) are domain I. Residues 62–140 (SEDDKGLFLK…DYVARLDRQD (79 aa)) are domain II. The interval 141-149 (EEQGNISPA) is flexible linker. The segment at 149–196 (ALNDALLALIALGYTQKEVDRITTKLEEVNADTADQYIKKGLALLLKK) is domain III.

Belongs to the RuvA family. As to quaternary structure, homotetramer. Forms an RuvA(8)-RuvB(12)-Holliday junction (HJ) complex. HJ DNA is sandwiched between 2 RuvA tetramers; dsDNA enters through RuvA and exits via RuvB. An RuvB hexamer assembles on each DNA strand where it exits the tetramer. Each RuvB hexamer is contacted by two RuvA subunits (via domain III) on 2 adjacent RuvB subunits; this complex drives branch migration. In the full resolvosome a probable DNA-RuvA(4)-RuvB(12)-RuvC(2) complex forms which resolves the HJ.

It is found in the cytoplasm. The RuvA-RuvB-RuvC complex processes Holliday junction (HJ) DNA during genetic recombination and DNA repair, while the RuvA-RuvB complex plays an important role in the rescue of blocked DNA replication forks via replication fork reversal (RFR). RuvA specifically binds to HJ cruciform DNA, conferring on it an open structure. The RuvB hexamer acts as an ATP-dependent pump, pulling dsDNA into and through the RuvAB complex. HJ branch migration allows RuvC to scan DNA until it finds its consensus sequence, where it cleaves and resolves the cruciform DNA. This is Holliday junction branch migration complex subunit RuvA from Lactobacillus helveticus (strain DPC 4571).